The primary structure comprises 192 residues: MGNISSNISAFQSLHIVMLGLDSAGKTTVLYRLKFNEFVNTVPTIGFNTEKIKLSNGTAKGISCHFWDVGGQEKLRPLWKSYSRCTDGIIYVVDSVDVDRLEEAKTELHKVTKFAENQGTPLLVIANKQDLPKSLPVAEIEKQLALHELIPATTYHVQPACAIIGEGLTEGMDKLYEMILKRRKSLKQKKKR.

Gly2 carries N-myristoyl glycine lipidation. GTP is bound by residues Gly20–Thr27, Asp68–Gln72, and Asn127–Asp130.

The protein belongs to the small GTPase superfamily. Arf family. In terms of assembly, interacts with CYTH2. Interacts with alpha tubulin; interaction is independent on the ARL4C GTP or GDP binding status. Expressed in several tumor cell lines (at protein level). Expressed in lung, brain, leukocytes and placenta.

It localises to the cell projection. The protein resides in the filopodium. Its subcellular location is the cell membrane. The protein localises to the cytoplasm. In terms of biological role, small GTP-binding protein which cycles between an inactive GDP-bound and an active GTP-bound form, and the rate of cycling is regulated by guanine nucleotide exchange factors (GEF) and GTPase-activating proteins (GAP). GTP-binding protein that does not act as an allosteric activator of the cholera toxin catalytic subunit. May be involved in transport between a perinuclear compartment and the plasma membrane, apparently linked to the ABCA1-mediated cholesterol secretion pathway. Recruits CYTH1, CYTH2, CYTH3 and CYTH4 to the plasma membrane in the GDP-bound form. Regulates the microtubule-dependent intracellular vesicular transport from early endosome to recycling endosome process. In Homo sapiens (Human), this protein is ADP-ribosylation factor-like protein 4C (ARL4C).